The primary structure comprises 308 residues: Oligopeptide transport ATP-binding protein AmiF (308 aa).

The ABC transporter domain maps to 6 to 251 (VEIKDLEISF…PIHPYTQALL (246 aa)). ATP is bound at residue 42–49 (GESGSGKT).

The protein belongs to the ABC transporter superfamily.

The protein localises to the cell membrane. Its function is as follows. Part of the binding-protein-dependent transport system for oligopeptides. Probably responsible for energy coupling to the transport system. The chain is Oligopeptide transport ATP-binding protein AmiF (amiF) from Streptococcus pneumoniae serotype 4 (strain ATCC BAA-334 / TIGR4).